The following is an 838-amino-acid chain: Kinesin-like protein KIFC2 (838 aa).

The span at 23–32 (AAAAEPGDPA) shows a compositional bias: low complexity. Disordered stretches follow at residues 23 to 48 (AAAAEPGDPAQRARKPRGRRRPDLPA) and 140 to 185 (LLQG…GQQP). A compositionally biased stretch (polar residues) spans 156–167 (DGSTSQEESPSH). Residues 186–351 (LQLEEDQRAW…SLRQGCGDLR (166 aa)) adopt a coiled-coil conformation. The Kinesin motor domain occupies 409 to 740 (NIRVLCRLRP…ARRSPRGRRI (332 aa)). Residue 484–491 (GQTGTGKT) participates in ATP binding. A disordered region spans residues 718-792 (RSPPTRARPP…SPGPPAPLRR (75 aa)).

Belongs to the TRAFAC class myosin-kinesin ATPase superfamily. Kinesin family.

Its subcellular location is the cytoplasm. It localises to the cytoskeleton. May play a role in microtubule-dependent retrograde axonal transport. May function as the motor for the transport of multivesicular body (MVB)-like organelles in dendrites. The chain is Kinesin-like protein KIFC2 (KIFC2) from Homo sapiens (Human).